We begin with the raw amino-acid sequence, 154 residues long: 6,7-dimethyl-8-ribityllumazine synthase (154 aa).

5-amino-6-(D-ribitylamino)uracil is bound by residues Trp22, Ser56–Glu58, and Ala80–Ile82. (2S)-2-hydroxy-3-oxobutyl phosphate is bound at residue Asp85 to Thr86. His88 functions as the Proton donor in the catalytic mechanism. Position 113 (Phe113) interacts with 5-amino-6-(D-ribitylamino)uracil. Arg127 contributes to the (2S)-2-hydroxy-3-oxobutyl phosphate binding site.

This sequence belongs to the DMRL synthase family.

The catalysed reaction is (2S)-2-hydroxy-3-oxobutyl phosphate + 5-amino-6-(D-ribitylamino)uracil = 6,7-dimethyl-8-(1-D-ribityl)lumazine + phosphate + 2 H2O + H(+). It participates in cofactor biosynthesis; riboflavin biosynthesis; riboflavin from 2-hydroxy-3-oxobutyl phosphate and 5-amino-6-(D-ribitylamino)uracil: step 1/2. Functionally, catalyzes the formation of 6,7-dimethyl-8-ribityllumazine by condensation of 5-amino-6-(D-ribitylamino)uracil with 3,4-dihydroxy-2-butanone 4-phosphate. This is the penultimate step in the biosynthesis of riboflavin. The chain is 6,7-dimethyl-8-ribityllumazine synthase from Deinococcus geothermalis (strain DSM 11300 / CIP 105573 / AG-3a).